A 279-amino-acid polypeptide reads, in one-letter code: Tryptophan synthase alpha chain (279 aa).

Catalysis depends on proton acceptor residues Glu50 and Asp61.

It belongs to the TrpA family. Tetramer of two alpha and two beta chains.

It catalyses the reaction (1S,2R)-1-C-(indol-3-yl)glycerol 3-phosphate + L-serine = D-glyceraldehyde 3-phosphate + L-tryptophan + H2O. It functions in the pathway amino-acid biosynthesis; L-tryptophan biosynthesis; L-tryptophan from chorismate: step 5/5. The alpha subunit is responsible for the aldol cleavage of indoleglycerol phosphate to indole and glyceraldehyde 3-phosphate. The polypeptide is Tryptophan synthase alpha chain (Rhizobium etli (strain ATCC 51251 / DSM 11541 / JCM 21823 / NBRC 15573 / CFN 42)).